A 468-amino-acid chain; its full sequence is ATP synthase subunit beta (468 aa).

155 to 162 (GGAGVGKT) is a binding site for ATP.

It belongs to the ATPase alpha/beta chains family. In terms of assembly, F-type ATPases have 2 components, CF(1) - the catalytic core - and CF(0) - the membrane proton channel. CF(1) has five subunits: alpha(3), beta(3), gamma(1), delta(1), epsilon(1). CF(0) has three main subunits: a(1), b(2) and c(9-12). The alpha and beta chains form an alternating ring which encloses part of the gamma chain. CF(1) is attached to CF(0) by a central stalk formed by the gamma and epsilon chains, while a peripheral stalk is formed by the delta and b chains.

Its subcellular location is the cell inner membrane. It carries out the reaction ATP + H2O + 4 H(+)(in) = ADP + phosphate + 5 H(+)(out). Produces ATP from ADP in the presence of a proton gradient across the membrane. The catalytic sites are hosted primarily by the beta subunits. The chain is ATP synthase subunit beta from Leptospira biflexa serovar Patoc (strain Patoc 1 / ATCC 23582 / Paris).